The primary structure comprises 390 residues: Elongation factor Tu 1 (390 aa).

Residues 10 to 201 (KPHVNVGTIG…LDEYVAVPPR (192 aa)) form the tr-type G domain. Residues 19 to 26 (GHVDHGKT) are G1. 19-26 (GHVDHGKT) is a GTP binding site. Mg(2+) is bound at residue T26. A G2 region spans residues 55–59 (GITIA). The G3 stretch occupies residues 76–79 (DCPG). GTP contacts are provided by residues 76–80 (DCPGH) and 131–134 (NKAD). Residues 131 to 134 (NKAD) form a G4 region. Residues 168–170 (SAL) are G5.

It belongs to the TRAFAC class translation factor GTPase superfamily. Classic translation factor GTPase family. EF-Tu/EF-1A subfamily. In terms of assembly, monomer.

It localises to the cytoplasm. It catalyses the reaction GTP + H2O = GDP + phosphate + H(+). Its function is as follows. GTP hydrolase that promotes the GTP-dependent binding of aminoacyl-tRNA to the A-site of ribosomes during protein biosynthesis. In Wolbachia pipientis wMel, this protein is Elongation factor Tu 1.